We begin with the raw amino-acid sequence, 134 residues long: Protein Turandot E (134 aa).

The N-terminal stretch at 1 to 38 (MSYTRTIHSSASILKMNSALQISCLLVVLGCLLGSGHC) is a signal peptide.

The protein belongs to the Turandot family.

The protein resides in the secreted. Functionally, a humoral factor that may play a role in stress tolerance. The polypeptide is Protein Turandot E (Drosophila sechellia (Fruit fly)).